The sequence spans 709 residues: MHPALLCGPILAIFLQFLVSSCSPLENDDLFLVQVEPEVDPVVAAEAIGAKYVRPLLNLKYHHLIKLHKGSDDSVQSSIRKRGIDAGILELERQTPRWRYKRDASESDELLNEFSNHFGISDPLFYGQWHIFNSNNPGHDLNLREVWDAGYFGENVTVAFVDDGIDFKHPDLQAAYTSLGSWDFNDNIADPLPKLSDDQHGTRCAGEVAAAWNDVCGVGIAPRAKVAGLRILSAPITDAVESEALNYGFQTNHIYSCSWGPADDGRAMDAPNTATRRALMNGVLNGRNGLGSIFVFASGNGGHYHDNCNFDGYTNSIFSATIGAVDAEHKIPFYSEVCAAQLVSAYSSGSHLSILTTNPEGTCTRSHGGTSAAAPLASAVYALALSIRPDLSWRDIQHITVYSASPFDSPSQNAEWQKTPAGFQFSHHFGFGKLDASKFVEVAKDWQVVNPQTWLIAPEINVNKSFGSVNNETITEMVSEFTVTKDMIEKSNFKRLEHVTVRVCIPFNRRGALEILLESPSGIRSILASERPYDENSKGFLDWTFMTVQHWAEPPEGVWKLLVNDRSGGKHEGTFENWQLALWGESENPSNTAPLPYDTLELPKEMVLGIYSEPNSDLTNSSTLLSPTSTSFTSYTVSATATPTSTSHIPIPTVLPPTQPVLEPSYREIVAFITFFLLFAFIFVAVIWTWISAFWKAKAPPPLSQQEIA.

An N-terminal signal peptide occupies residues 1 to 22 (MHPALLCGPILAIFLQFLVSSC). Propeptides lie at residues 23-82 (SPLE…IRKR) and 83-102 (GIDA…RYKR). Residues 103–668 (DASESDELLN…QPVLEPSYRE (566 aa)) are Lumenal-facing. A Peptidase S8 domain is found at 128–440 (QWHIFNSNNP…FGKLDASKFV (313 aa)). An N-linked (GlcNAc...) asparagine glycan is attached at Asn-155. Active-site charge relay system residues include Asp-162 and His-200. Intrachain disulfides connect Cys-216/Cys-363 and Cys-308/Cys-338. Ser-371 acts as the Charge relay system in catalysis. Residues 449–588 (VNPQTWLIAP…QLALWGESEN (140 aa)) enclose the P/Homo B domain. N-linked (GlcNAc...) asparagine glycosylation is found at Asn-463, Asn-471, and Asn-620. A helical transmembrane segment spans residues 669-693 (IVAFITFFLLFAFIFVAVIWTWISA). Residues 694–709 (FWKAKAPPPLSQQEIA) are Cytoplasmic-facing.

It belongs to the peptidase S8 family. Furin subfamily. The cofactor is Ca(2+). In terms of processing, N-glycosylated.

The protein localises to the golgi apparatus. Its subcellular location is the trans-Golgi network membrane. Its function is as follows. Membrane-bound, subtilisin-like serine protease that processes the P-factor precursor and other precursor proteins. Essential for cell viability. Cleaves substrate on the C-terminal side of dibasic residues. In Schizosaccharomyces pombe (strain 972 / ATCC 24843) (Fission yeast), this protein is Dibasic-processing endoprotease (krp1).